The primary structure comprises 471 residues: Replication factor C large subunit (471 aa).

44–51 (GSPGIGKT) contributes to the ATP binding site. The span at 422 to 431 (RTDAAVDHSE) shows a compositional bias: basic and acidic residues. The tract at residues 422–471 (RTDAAVDHSEGAFAGAVREDNTDEDSAADETTDGDEDTGADSQRGLDEFF) is disordered. Over residues 442-460 (NTDEDSAADETTDGDEDTG) the composition is skewed to acidic residues.

It belongs to the activator 1 small subunits family. RfcL subfamily. As to quaternary structure, heteromultimer composed of small subunits (RfcS) and large subunits (RfcL).

Functionally, part of the RFC clamp loader complex which loads the PCNA sliding clamp onto DNA. In Halobacterium salinarum (strain ATCC 29341 / DSM 671 / R1), this protein is Replication factor C large subunit.